The primary structure comprises 89 residues: Small ribosomal subunit protein uS15 (89 aa).

Belongs to the universal ribosomal protein uS15 family. Part of the 30S ribosomal subunit. Forms a bridge to the 50S subunit in the 70S ribosome, contacting the 23S rRNA.

One of the primary rRNA binding proteins, it binds directly to 16S rRNA where it helps nucleate assembly of the platform of the 30S subunit by binding and bridging several RNA helices of the 16S rRNA. In terms of biological role, forms an intersubunit bridge (bridge B4) with the 23S rRNA of the 50S subunit in the ribosome. The polypeptide is Small ribosomal subunit protein uS15 (Pediococcus pentosaceus (strain ATCC 25745 / CCUG 21536 / LMG 10740 / 183-1w)).